A 1141-amino-acid chain; its full sequence is Isoleucine--tRNA ligase (1141 aa).

The short motif at 50-60 (PSANGMPGIHH) is the 'HIGH' region element. Residues 689-693 (KMSKR) carry the 'KMSKS' region motif. Lys-692 contributes to the ATP binding site.

This sequence belongs to the class-I aminoacyl-tRNA synthetase family. IleS type 2 subfamily. In terms of assembly, monomer. The cofactor is Zn(2+).

The protein resides in the cytoplasm. It carries out the reaction tRNA(Ile) + L-isoleucine + ATP = L-isoleucyl-tRNA(Ile) + AMP + diphosphate. Functionally, catalyzes the attachment of isoleucine to tRNA(Ile). As IleRS can inadvertently accommodate and process structurally similar amino acids such as valine, to avoid such errors it has two additional distinct tRNA(Ile)-dependent editing activities. One activity is designated as 'pretransfer' editing and involves the hydrolysis of activated Val-AMP. The other activity is designated 'posttransfer' editing and involves deacylation of mischarged Val-tRNA(Ile). This chain is Isoleucine--tRNA ligase, found in Bacteroides fragilis (strain ATCC 25285 / DSM 2151 / CCUG 4856 / JCM 11019 / LMG 10263 / NCTC 9343 / Onslow / VPI 2553 / EN-2).